Here is a 185-residue protein sequence, read N- to C-terminus: ATP synthase subunit delta (185 aa).

This sequence belongs to the ATPase delta chain family. F-type ATPases have 2 components, F(1) - the catalytic core - and F(0) - the membrane proton channel. F(1) has five subunits: alpha(3), beta(3), gamma(1), delta(1), epsilon(1). CF(0) has four main subunits: a(1), b(1), b'(1) and c(10-14). The alpha and beta chains form an alternating ring which encloses part of the gamma chain. F(1) is attached to F(0) by a central stalk formed by the gamma and epsilon chains, while a peripheral stalk is formed by the delta, b and b' chains.

Its subcellular location is the cellular thylakoid membrane. Functionally, f(1)F(0) ATP synthase produces ATP from ADP in the presence of a proton or sodium gradient. F-type ATPases consist of two structural domains, F(1) containing the extramembraneous catalytic core and F(0) containing the membrane proton channel, linked together by a central stalk and a peripheral stalk. During catalysis, ATP synthesis in the catalytic domain of F(1) is coupled via a rotary mechanism of the central stalk subunits to proton translocation. In terms of biological role, this protein is part of the stalk that links CF(0) to CF(1). It either transmits conformational changes from CF(0) to CF(1) or is implicated in proton conduction. The sequence is that of ATP synthase subunit delta from Picosynechococcus sp. (strain ATCC 27264 / PCC 7002 / PR-6) (Agmenellum quadruplicatum).